Consider the following 253-residue polypeptide: Pro-opiomelanocortin A (253 aa).

The N-terminal stretch at Met1–Gly21 is a signal peptide. Gln22 carries the pyrrolidone carboxylic acid modification. Disulfide bonds link Cys23/Cys45 and Cys29/Cys41. Ser104 carries the N-acetylserine; in Corticotropin modification. Val116 bears the Valine amide mark. The interval Gln228 to Gly253 is disordered. A Glutamine amide; partial modification is found at Gln252.

Belongs to the POMC family. Post-translationally, specific enzymatic cleavages at paired basic residues yield the different active peptides. Acetylation of beta-endorphin occurs in a tissue-specific manner. C-terminal peptide 1 and C-terminal peptide 2 are detected in the anterior part of the nucleus lateralis tuberis of hypothalamus, in dorsal hypothalamus, thalamus, telencephalon, optic tectum and medulla oblongata (at protein level). Expressed in pituitary and hypothalamus of adult diploid animals, and hypothalamus of triploid and ovulated female trout.

It localises to the secreted. Its function is as follows. Stimulates the adrenal glands to release cortisol. Melanocyte-stimulating hormone alpha: Anorexigenic peptide. Increases the pigmentation of skin by increasing melanin production in melanocytes. Functionally, melanocyte-stimulating hormone beta: Increases the pigmentation of skin by increasing melanin production in melanocytes. In terms of biological role, beta-endorphin: Endogenous orexigenic opiate. Its function is as follows. Endogenous opiate. This Oncorhynchus mykiss (Rainbow trout) protein is Pro-opiomelanocortin A (pomca).